We begin with the raw amino-acid sequence, 1006 residues long: 5'-3' exoribonuclease 2 (1006 aa).

Coiled-coil stretches lie at residues 256–287 (FAQD…NSEQ) and 453–544 (RLKK…AESE). A required for retention in the nucleus region spans residues 492–529 (DDAVSKANKTNFNLAEVMKQKIINKKHRLEKDNEEEEI). Positions 561–575 (DRENSETTEVSRDSP) are enriched in basic and acidic residues. 2 disordered regions span residues 561–584 (DREN…NVSE) and 939–1006 (HNYG…ANRR). Phosphoserine is present on serine 574. A compositionally biased stretch (polar residues) spans 939–956 (HNYGRNSYNSQPGFNNSR). Tandem repeats lie at residues 955-958 (SRYD), 961-964 (NNNY), 972-974 (NNN), 975-978 (YSGN), 984-986 (YSG), and 996-999 (SRYD). Residues 955 to 999 (SRYDGGNNNYRQNSNYRNNNYSGNRNSGQYSGNSYSRNNKQSRYD) form a 2 X 4 AA repeats of S-R-Y-D, N-N-N-Y, Y-S-G-N region. Low complexity predominate over residues 959–993 (GGNNNYRQNSNYRNNNYSGNRNSGQYSGNSYSRNN). Basic and acidic residues predominate over residues 996 to 1006 (SRYDNSRANRR).

The protein belongs to the 5'-3' exonuclease family. XRN2/RAT1 subfamily. As to quaternary structure, interacts with RAI1 and RTT103. Requires Mg(2+) as cofactor. Mn(2+) serves as cofactor.

The protein resides in the nucleus. With respect to regulation, inhibited by nucleoside 3', 5'-bisphosphates. Its function is as follows. Possesses 5'-&gt;3' exoribonuclease activity. Required for the processing of nuclear mRNA, rRNA and small nucleolar RNA (snoRNA) precursors. May promote termination of transcription by RNA polymerase II via the recruitment of 3'-end processing factors to the poly(A) site and by the degradation of nascent RNA downstream of the poly(A) site. The sequence is that of 5'-3' exoribonuclease 2 (RAT1) from Saccharomyces cerevisiae (strain ATCC 204508 / S288c) (Baker's yeast).